The following is a 566-amino-acid chain: MALSVPGYSPGFRKPPEVVRLRRKRARSRGAAASPPRELTEPAARRAALVAGLPLRPFPAAGGRGGGSGGGPAAARRNPFARLDNRPRVAAEPPDGPAREQPEAPVPFLDSNQENDLLWEEKFPERTTVTELPQTSHVSFSEPDIPSSKSTELPVDWSIKTRLLFTSSQPFTWADHLKAQEEAQGLVQHCRATEVTLPKSIQDPKLSSELRCTFQQSLIYWLHPALSWLPLFPRIGADRKMAGKTSPWSNDATLQHVLMSDWSVSFTSLYNLLKTKLCPYFYVCTYQFTVLFRAAGLAGSDLITALISPTTRGLREAMRNEGIEFSLPLIKESGHKKETASGTSLGYGEEQAISDEDEEESFSWLEEMGVQDKIKKPDILSIKLRKEKHEVQMDHRPESVVLVKGINTFTLLNFLINSKSLVATSGPQAGLPPTLLSPVAFRGATMQMLKARSVNVKTQALSGYRDQFSLEITGPIMPHSLHSLTMLLKSSQSGSFSAVLYPHEPTAVFNICLQMDKVLDMEVVHKELTNCGLHPNTLEQLSQIPLLGKSSLRNVVLRDYIYNWRS.

Residues 1–110 (MALSVPGYSP…QPEAPVPFLD (110 aa)) are disordered. 2 positions are modified to phosphoserine: serine 28 and serine 34. Residues 62–72 (GGRGGGSGGGP) show a composition bias toward gly residues. Residues 73–82 (AAARRNPFAR) are compositionally biased toward low complexity.

The protein belongs to the DONSON family. Component of the replisome complex composed of at least DONSON, MCM2, MCM7, PCNA and TICRR; interaction at least with PCNA occurs during DNA replication. In terms of tissue distribution, expressed in the brain, with higher levels in prenatal compared to adult brain.

It is found in the nucleus. In terms of biological role, replisome component that maintains genome stability by protecting stalled or damaged replication forks. After the induction of replication stress, required for the stabilization of stalled replication forks, the efficient activation of the intra-S-phase and G/2M cell-cycle checkpoints and the maintenance of genome stability. This chain is Protein downstream neighbor of Son (DONSON), found in Homo sapiens (Human).